The following is a 302-amino-acid chain: MNQKGRGLEILINEKQDGQWLFSVLKTALKASKPVIQDWMSHQQIKVNHESVLNNMIVKKGDRVFIDLQESEASSVIPEYGELDILFEDNHMLIINKPAGIATHPNEDGQTGTLANLIAYHYQINGETCKVRHVHRLDQDTSGAIVFAKHRLAHAILDQQLEKKTLKRTYTAIAEGKLRTKKGTINSPIGRDRSHPTRRRVSPGGQTAVTHFKVMASNAKERLSLVELELETGRTHQIRVHLASLGHPLTGDSLYGGGSKLLNRQALHANKVQAVHPITDELIVAEAPFPADMKNLCRTYFS.

An S4 RNA-binding domain is found at 19–90 (QWLFSVLKTA…GELDILFEDN (72 aa)). Asp138 is a catalytic residue. The tract at residues 182–205 (KGTINSPIGRDRSHPTRRRVSPGG) is disordered.

The protein belongs to the pseudouridine synthase RluA family.

The catalysed reaction is a uridine in RNA = a pseudouridine in RNA. This is an uncharacterized protein from Bacillus subtilis (strain 168).